A 338-amino-acid polypeptide reads, in one-letter code: Large ribosomal subunit protein uL3 (338 aa).

Basic residues predominate over residues 228 to 237; it reads HKHRKGHRRT. Residues 228–255 are disordered; sequence HKHRKGHRRTGTIGPQAPALMFTQPRPG.

It belongs to the universal ribosomal protein uL3 family. As to quaternary structure, part of the 50S ribosomal subunit. Forms a cluster with proteins L14 and L24e.

Functionally, one of the primary rRNA binding proteins, it binds directly near the 3'-end of the 23S rRNA, where it nucleates assembly of the 50S subunit. The sequence is that of Large ribosomal subunit protein uL3 from Pyrobaculum calidifontis (strain DSM 21063 / JCM 11548 / VA1).